A 137-amino-acid polypeptide reads, in one-letter code: Large ribosomal subunit protein uL16 (137 aa).

This sequence belongs to the universal ribosomal protein uL16 family. In terms of assembly, part of the 50S ribosomal subunit.

Its function is as follows. Binds 23S rRNA and is also seen to make contacts with the A and possibly P site tRNAs. This chain is Large ribosomal subunit protein uL16, found in Pseudomonas putida (strain ATCC 47054 / DSM 6125 / CFBP 8728 / NCIMB 11950 / KT2440).